The chain runs to 157 residues: Transcription elongation factor GreA (157 aa).

The interval 1–60 is disordered; sequence MEKVPMTSAGFAALGEELKKRQSEDRPRIIEHIAEARSHGDLSENAEYHAAKEEQSHNEG. Residues 16 to 60 show a composition bias toward basic and acidic residues; sequence EELKKRQSEDRPRIIEHIAEARSHGDLSENAEYHAAKEEQSHNEG. Residues 46-73 are a coiled coil; that stretch reads AEYHAAKEEQSHNEGRIAELEDKLARAD.

Belongs to the GreA/GreB family.

Its function is as follows. Necessary for efficient RNA polymerase transcription elongation past template-encoded arresting sites. The arresting sites in DNA have the property of trapping a certain fraction of elongating RNA polymerases that pass through, resulting in locked ternary complexes. Cleavage of the nascent transcript by cleavage factors such as GreA or GreB allows the resumption of elongation from the new 3'terminus. GreA releases sequences of 2 to 3 nucleotides. This is Transcription elongation factor GreA from Bradyrhizobium diazoefficiens (strain JCM 10833 / BCRC 13528 / IAM 13628 / NBRC 14792 / USDA 110).